We begin with the raw amino-acid sequence, 261 residues long: Transmembrane protein 106A (261 aa).

Polar residues predominate over residues 1-10 (MGKAFSQLTS). Residues 1-22 (MGKAFSQLTSQKDEDKSILPDN) are disordered. Residues 93–113 (LSVFLAVTICLLIFSLTIFFL) form a helical membrane-spanning segment.

The protein belongs to the TMEM106 family.

It is found in the cell membrane. Its function is as follows. Activates macrophages and polarizes them into M1-like macrophages through the activation of the MAPK and NF-kappaB signaling pathway. Upon activation, up-regulates the expression of CD80, CD86, CD69 and MHC II on macrophages, and induces the release of pro-inflammatory cytokines such as TNF, IL1B, IL6, CCL2 and nitric oxide. May play a role in inhibition of proliferation and migration. The protein is Transmembrane protein 106A (Tmem106a) of Rattus norvegicus (Rat).